The following is a 175-amino-acid chain: Protein-export protein SecB (175 aa).

Positions Q154 to Q175 are disordered.

The protein belongs to the SecB family. Homotetramer, a dimer of dimers. One homotetramer interacts with 1 SecA dimer.

The protein localises to the cytoplasm. Its function is as follows. One of the proteins required for the normal export of preproteins out of the cell cytoplasm. It is a molecular chaperone that binds to a subset of precursor proteins, maintaining them in a translocation-competent state. It also specifically binds to its receptor SecA. This chain is Protein-export protein SecB, found in Bordetella petrii (strain ATCC BAA-461 / DSM 12804 / CCUG 43448).